The following is a 247-amino-acid chain: Geranylgeranylglyceryl phosphate synthase (247 aa).

The Mg(2+) site is built by D23 and S52. Sn-glycerol 1-phosphate contacts are provided by residues 171–177, 203–204, and 225–226; these read YLEAGSG, GG, and GT.

It belongs to the GGGP/HepGP synthase family. Group II subfamily. Mg(2+) is required as a cofactor.

The protein resides in the cytoplasm. The enzyme catalyses sn-glycerol 1-phosphate + (2E,6E,10E)-geranylgeranyl diphosphate = sn-3-O-(geranylgeranyl)glycerol 1-phosphate + diphosphate. The protein operates within membrane lipid metabolism; glycerophospholipid metabolism. In terms of biological role, prenyltransferase that catalyzes the transfer of the geranylgeranyl moiety of geranylgeranyl diphosphate (GGPP) to the C3 hydroxyl of sn-glycerol-1-phosphate (G1P). This reaction is the first ether-bond-formation step in the biosynthesis of archaeal membrane lipids. The chain is Geranylgeranylglyceryl phosphate synthase from Methanosarcina mazei (strain ATCC BAA-159 / DSM 3647 / Goe1 / Go1 / JCM 11833 / OCM 88) (Methanosarcina frisia).